Here is a 172-residue protein sequence, read N- to C-terminus: Macro domain-containing protein lp_3408 (172 aa).

Residues 1–171 (MVEIKVIHGD…VFSTALAALT (171 aa)) form the Macro domain.

Belongs to the MacroD-type family.

This is Macro domain-containing protein lp_3408 from Lactiplantibacillus plantarum (strain ATCC BAA-793 / NCIMB 8826 / WCFS1) (Lactobacillus plantarum).